The sequence spans 435 residues: Glutamyl-tRNA reductase (435 aa).

Substrate contacts are provided by residues 49-52 (TCNR), S109, 114-116 (ETQ), and Q120. C50 functions as the Nucleophile in the catalytic mechanism. Residue 189–194 (GAGEMS) participates in NADP(+) binding.

The protein belongs to the glutamyl-tRNA reductase family. In terms of assembly, homodimer.

The enzyme catalyses (S)-4-amino-5-oxopentanoate + tRNA(Glu) + NADP(+) = L-glutamyl-tRNA(Glu) + NADPH + H(+). It participates in porphyrin-containing compound metabolism; protoporphyrin-IX biosynthesis; 5-aminolevulinate from L-glutamyl-tRNA(Glu): step 1/2. Its function is as follows. Catalyzes the NADPH-dependent reduction of glutamyl-tRNA(Glu) to glutamate 1-semialdehyde (GSA). The polypeptide is Glutamyl-tRNA reductase (Listeria innocua serovar 6a (strain ATCC BAA-680 / CLIP 11262)).